We begin with the raw amino-acid sequence, 53 residues long: Small ribosomal subunit protein uS14 (53 aa).

4 residues coordinate Zn(2+): C18, C21, C36, and C39.

The protein belongs to the universal ribosomal protein uS14 family. Zinc-binding uS14 subfamily. As to quaternary structure, part of the 30S ribosomal subunit. Zn(2+) serves as cofactor.

In terms of biological role, binds 16S rRNA, required for the assembly of 30S particles. This is Small ribosomal subunit protein uS14 from Thermoplasma volcanium (strain ATCC 51530 / DSM 4299 / JCM 9571 / NBRC 15438 / GSS1).